A 1157-amino-acid polypeptide reads, in one-letter code: Endo-1,4-beta-xylanase A (1157 aa).

An N-terminal signal peptide occupies residues 1 to 33; sequence MMKNNVDRIVSIVTALIMIFGASLFSPPIRVFA. 2 consecutive CBM-cenC domains span residues 38 to 189 and 195 to 343; these read INLV…VTTQ and GNVI…VIGE. One can recognise a GH10 domain in the interval 352–675; the sequence is QNDIPDLYSV…KPAFWAVVDP (324 aa). The active-site Proton donor is the Glu495. Residue Asp537 is part of the active site. Glu600 (nucleophile) is an active-site residue. SLH domains follow at residues 1051–1114 and 1115–1157; these read KKGV…YSGE and FSDV…EMTQ.

Belongs to the glycosyl hydrolase 10 (cellulase F) family.

It catalyses the reaction Endohydrolysis of (1-&gt;4)-beta-D-xylosidic linkages in xylans.. The protein operates within glycan degradation; xylan degradation. Functionally, endo-acting enzyme that randomly cleaves the internal xylosidic linkages of the xylan backbone, yielding xylooligosaccharides of various lengths which are further hydrolyzed to xylose molecules by beta-xylosidase (EC 3.2.1.37). Requires at least three xylose residues for catalytic activity. Does not have activity against xylobiose. The sequence is that of Endo-1,4-beta-xylanase A (xynA) from Thermoanaerobacterium saccharolyticum.